A 331-amino-acid chain; its full sequence is Large ribosomal subunit protein uL3 (331 aa).

The protein belongs to the universal ribosomal protein uL3 family. Part of the 50S ribosomal subunit. Forms a cluster with proteins L14 and L24e.

In terms of biological role, one of the primary rRNA binding proteins, it binds directly near the 3'-end of the 23S rRNA, where it nucleates assembly of the 50S subunit. The chain is Large ribosomal subunit protein uL3 from Thermoplasma acidophilum (strain ATCC 25905 / DSM 1728 / JCM 9062 / NBRC 15155 / AMRC-C165).